The primary structure comprises 447 residues: UDP-N-acetylmuramate--L-alanine ligase (447 aa).

108 to 114 (GSHGKTS) provides a ligand contact to ATP.

This sequence belongs to the MurCDEF family.

It localises to the cytoplasm. It carries out the reaction UDP-N-acetyl-alpha-D-muramate + L-alanine + ATP = UDP-N-acetyl-alpha-D-muramoyl-L-alanine + ADP + phosphate + H(+). It functions in the pathway cell wall biogenesis; peptidoglycan biosynthesis. Its function is as follows. Cell wall formation. The sequence is that of UDP-N-acetylmuramate--L-alanine ligase from Listeria monocytogenes serotype 4a (strain HCC23).